A 265-amino-acid polypeptide reads, in one-letter code: Thymidine kinase 2, mitochondrial (265 aa).

A mitochondrion-targeting transit peptide spans 1-33; it reads MLLRPLRGWAALALRCFEPGSPGSPASGPGSRR. The span at 21 to 31 shows a compositional bias: low complexity; sequence SPGSPASGPGS. A disordered region spans residues 21–45; it reads SPGSPASGPGSRRVQRGAWPSDKER. ATP is bound at residue 57 to 65; that stretch reads GNIASGKTT. The active-site Proton acceptor is the glutamate 133.

Belongs to the DCK/DGK family. Homodimer.

It is found in the mitochondrion. It catalyses the reaction thymidine + ATP = dTMP + ADP + H(+). It carries out the reaction 2'-deoxycytidine + ATP = dCMP + ADP + H(+). The catalysed reaction is 2'-deoxyuridine + ATP = dUMP + ADP + H(+). In terms of biological role, phosphorylates thymidine, deoxycytidine, and deoxyuridine in the mitochondrial matrix. In non-replicating cells, where cytosolic dNTP synthesis is down-regulated, mtDNA synthesis depends solely on TK2 and DGUOK. This Macaca fascicularis (Crab-eating macaque) protein is Thymidine kinase 2, mitochondrial (TK2).